A 633-amino-acid chain; its full sequence is Phosphomethylpyrimidine synthase (633 aa).

Residues asparagine 245, methionine 274, tyrosine 303, histidine 339, 359 to 361, 400 to 403, and glutamate 439 contribute to the substrate site; these read SRG and DGLR. A Zn(2+)-binding site is contributed by histidine 443. Tyrosine 466 is a binding site for substrate. Histidine 507 contributes to the Zn(2+) binding site. [4Fe-4S] cluster is bound by residues cysteine 587, cysteine 590, and cysteine 595.

The protein belongs to the ThiC family. In terms of assembly, homodimer. The cofactor is [4Fe-4S] cluster.

It carries out the reaction 5-amino-1-(5-phospho-beta-D-ribosyl)imidazole + S-adenosyl-L-methionine = 4-amino-2-methyl-5-(phosphooxymethyl)pyrimidine + CO + 5'-deoxyadenosine + formate + L-methionine + 3 H(+). It functions in the pathway cofactor biosynthesis; thiamine diphosphate biosynthesis. Functionally, catalyzes the synthesis of the hydroxymethylpyrimidine phosphate (HMP-P) moiety of thiamine from aminoimidazole ribotide (AIR) in a radical S-adenosyl-L-methionine (SAM)-dependent reaction. The sequence is that of Phosphomethylpyrimidine synthase from Neisseria meningitidis serogroup C (strain 053442).